Consider the following 165-residue polypeptide: Phosphopantetheine adenylyltransferase (165 aa).

S10 serves as a coordination point for substrate. ATP is bound by residues 10-11 and H18; that span reads SF. 3 residues coordinate substrate: K42, L74, and R88. Residues 89–91, E99, and 124–130 contribute to the ATP site; these read GLR and WFYTSST.

It belongs to the bacterial CoaD family. Homohexamer. The cofactor is Mg(2+).

Its subcellular location is the cytoplasm. The catalysed reaction is (R)-4'-phosphopantetheine + ATP + H(+) = 3'-dephospho-CoA + diphosphate. The protein operates within cofactor biosynthesis; coenzyme A biosynthesis; CoA from (R)-pantothenate: step 4/5. In terms of biological role, reversibly transfers an adenylyl group from ATP to 4'-phosphopantetheine, yielding dephospho-CoA (dPCoA) and pyrophosphate. This is Phosphopantetheine adenylyltransferase from Syntrophus aciditrophicus (strain SB).